Reading from the N-terminus, the 810-residue chain is LPS-assembly protein LptD (810 aa).

The first 29 residues, Met-1–Ala-29, serve as a signal peptide directing secretion.

This sequence belongs to the LptD family. As to quaternary structure, component of the lipopolysaccharide transport and assembly complex. Interacts with LptE and LptA.

It localises to the cell outer membrane. In terms of biological role, together with LptE, is involved in the assembly of lipopolysaccharide (LPS) at the surface of the outer membrane. The chain is LPS-assembly protein LptD from Aeromonas salmonicida (strain A449).